A 174-amino-acid polypeptide reads, in one-letter code: F-box protein At1g70360 (174 aa).

Residues 136–174 (PPCFISLPRELKHKILESLPGVDIGTLACVSSELRDMAS) form the F-box domain.

The sequence is that of F-box protein At1g70360 from Arabidopsis thaliana (Mouse-ear cress).